Consider the following 371-residue polypeptide: MELELDAGDQDLLAFLLEESGDLGTAPDEAVRAPLDWALPLSEVPSDWEVDDLLCSLLSPPASLNILSSSNPCLVHHDHTYSLPRETVSMDLESESCRKEGTQMTPQHMEELAEQEIARLVLTDEEKSLLEKEGLILPETLPLTKTEEQILKRVRRKIRNKRSAQESRRKKKVYVGGLESRVLKYTAQNMELQNKVQLLEEQNLSLLDQLRKLQAMVIEISNKTSSSSTCILVLLVSFCLLLVPAMYSSDTRGSLPAEHGVLSRQLRALPSEDPYQLELPALQSEVPKDSTHQWLDGSDCVLQAPGNTSCLLHYMPQAPSAEPPLEWPFPDLFSEPLCRGPILPLQANLTRKGGWLPTGSPSVILQDRYSG.

Residues 1 to 92 (MELELDAGDQ…LPRETVSMDL (92 aa)) are transcription activation (acidic). Residues 1-230 (MELELDAGDQ…SNKTSSSSTC (230 aa)) lie on the Cytoplasmic side of the membrane. Short sequence motifs (LXXLL motif) lie at residues 13–17 (LAFLL) and 54–58 (LCSLL). Positions 78-81 (DHTY) match the HCFC1-binding-motif (HBM) motif. The 64-residue stretch at 150–213 (ILKRVRRKIR…LSLLDQLRKL (64 aa)) folds into the bZIP domain. Positions 152–184 (KRVRRKIRNKRSAQESRRKKKVYVGGLESRVLK) are basic motif. Positions 192–213 (LQNKVQLLEEQNLSLLDQLRKL) are leucine-zipper. Residues 231–247 (ILVLLVSFCLLLVPAMY) traverse the membrane as a helical; Signal-anchor for type II membrane protein segment. The Lumenal segment spans residues 248–371 (SSDTRGSLPA…SVILQDRYSG (124 aa)). Residues Asn-307 and Asn-348 are each glycosylated (N-linked (GlcNAc...) asparagine).

It belongs to the bZIP family. ATF subfamily. In terms of assembly, homodimer. Isoform 1 interacts with HCFC1; the interaction is required to stimulate CREB3 transcriptional activity. Isoform 1 interacts with CREBZF; the interaction occurs only in combination with HCFC1. Isoform 1 interacts (via central part and transmembrane region) with DCSTAMP (via C-terminus cytoplasmic domain). Isoform 1 interacts with OS9. Isoform 1 interacts (via leucine-zipper domain) with CREBRF (via leucine-zipper domain); the interaction occurs only after CREB3 activation and promotes CREB3 degradation. Isoform 1 interacts (via C-terminal domain) with CCR1. As to quaternary structure, (Microbial infection) Interacts with the HCV core protein; homodimerization is prevented by the HCV core protein. Isoform 1 interacts (via leucine-zipper and transmembrane domains) with HIV-1 TMgp41 (via cytoplasmic domain); the interaction reduces CREB3 stability. Processed cyclic AMP-responsive element-binding protein 3 interacts with HIV-1 Tat. In terms of processing, first proteolytically cleaved by site-1 protease (S1P) that generates membrane-associated N-terminus and a luminal C-terminus forms. The membrane-associated N-terminus form is further proteolytically processed probably by the site-2 protease (S2P) through a regulated intramembrane proteolysis (RIP), releasing the transcriptional active processed cyclic AMP-responsive element-binding protein 3 form, which is transported to the nucleus. The proteolytic cleavage is strongly induced during dendritic cell (DC) maturation and inhibited by DCSTAMP. That form is rapidly degraded. N-glycosylated. Ubiquitously expressed. Expressed in dendritic cells (DC). Weakly expressed in monocytes (at protein level).

It localises to the endoplasmic reticulum membrane. Its subcellular location is the golgi apparatus. The protein resides in the cytoplasm. The protein localises to the nucleus. In terms of biological role, endoplasmic reticulum (ER)-bound sequence-specific transcription factor that directly binds DNA and activates transcription. Plays a role in the unfolded protein response (UPR), promoting cell survival versus ER stress-induced apoptotic cell death. Also involved in cell proliferation, migration and differentiation, tumor suppression and inflammatory gene expression. Acts as a positive regulator of LKN-1/CCL15-induced chemotaxis signaling of leukocyte cell migration. Associates with chromatin to the HERPUD1 promoter. Also induces transcriptional activation of chemokine receptors. (Microbial infection) Plays a role in human immunodeficiency virus type 1 (HIV-1) virus protein expression. Its function is as follows. (Microbial infection) May play a role as a cellular tumor suppressor that is targeted by the hepatitis C virus (HCV) core protein. Functionally, (Microbial infection) Plays a role in herpes simplex virus-1 (HSV-1) latent infection and reactivation from latency. Represses the VP16-mediated transactivation of immediate early genes of the HSV-1 virus by sequestering host cell factor-1 HCFC1 in the ER membrane of sensory neurons, thereby preventing the initiation of the replicative cascade leading to latent infection. In terms of biological role, functions as a negative transcriptional regulator in ligand-induced transcriptional activation of the glucocorticoid receptor NR3C1 by recruiting and activating histone deacetylases (HDAC1, HDAC2 and HDAC6). Also decreases the acetylation level of histone H4. Does not promote the chemotactic activity of leukocyte cells. This is the transcriptionally active form that translocates to the nucleus and activates unfolded protein response (UPR) target genes during endoplasmic reticulum (ER) stress response. Binds the cAMP response element (CRE) (consensus: 5'-GTGACGT[AG][AG]-3') and C/EBP sequences present in many promoters to activate transcription of the genes. Binds to the unfolded protein response element (UPRE) consensus sequences sites. Binds DNA to the 5'-CCAC[GA]-3'half of ERSE II (5'-ATTGG-N-CCACG-3'). Its function is as follows. (Microbial infection) Activates transcription of genes required for reactivation of the latent HSV-1 virus. It's transcriptional activity is inhibited by CREBZF in a HCFC1-dependent manner, by the viral transactivator protein VP16. Binds DNA to the cAMP response element (CRE) (consensus: 5'-GTGACGT[AG][AG]-3') and C/EBP sequences present in many viral promoters. Functionally, (Microbial infection) It's transcriptional activity is inhibited by CREBZF in a HCFC1-dependent manner, by the viral transactivator HCV core protein. The protein is Cyclic AMP-responsive element-binding protein 3 (CREB3) of Homo sapiens (Human).